A 586-amino-acid polypeptide reads, in one-letter code: Old nuclease (586 aa).

The segment at 1 to 163 (MTVRLASVSI…VEDSTKCKNT (163 aa)) is ATPase domain N-terminus. 34-38 (NAGKS) serves as a coordination point for ATP. The dimerization domain stretch occupies residues 164-270 (TTIGKILSAI…SRFGHGTQRS (107 aa)). The ATPase domain C-terminus stretch occupies residues 271–390 (IQMALIQYLA…TLSNSSYLLF (120 aa)). Residues 393–586 (EVLLVEGKTE…DEMEDFIKWI (194 aa)) form a toprim domain region. Residues E398, E402, D453, D455, D541, and E543 each coordinate a divalent metal cation. R570 serves as the catalytic Stabilizes transition state or protonates leaving group.

The protein belongs to the class 1 OLD nuclease family. It depends on Mg(2+) as a cofactor.

The enzyme catalyses Exonucleolytic cleavage in the 5'- to 3'-direction to yield nucleoside 5'-phosphates.. Functionally, an exonuclease that acts preferentially on linear dsDNA, processively degrading it from 5'-3', releasing 5'-phosphomononucleotides. Initiates on 5'-phosphate and 5'-hydroxyl ends. Also acts on linear ssDNA, nicked DNA and RNA. ATP enhances but is not necessary for exonuclease activity; has ATPase activity that is not stimulated by DNA. The old protein kills E.coli recB and recC mutants and interferes with phage lambda growth. Both the exonuclease and ATPase activities are required in vivo. Probably interferes with lambda phage by degrading its linear DNA. Isolated as a mutant able to lysogenize E.coli strain C cells normally not susceptible to lysis by phage P2. The polypeptide is Old nuclease (Enterobacteriaceae (Bacteriophage P2)).